The sequence spans 103 residues: Large ribosomal subunit protein eL14 (103 aa).

This sequence belongs to the eukaryotic ribosomal protein eL14 family.

This is Large ribosomal subunit protein eL14 from Pyrobaculum aerophilum (strain ATCC 51768 / DSM 7523 / JCM 9630 / CIP 104966 / NBRC 100827 / IM2).